The following is a 91-amino-acid chain: YcgL domain-containing protein Ent638_2370 (91 aa).

The YcgL domain occupies 1–85 (MFCVIYRSAK…PPENLLKQHL (85 aa)).

This chain is YcgL domain-containing protein Ent638_2370, found in Enterobacter sp. (strain 638).